A 718-amino-acid polypeptide reads, in one-letter code: Methionine--tRNA ligase (718 aa).

A 'HIGH' region motif is present at residues 27-37; the sequence is PYANGQIHIGH. The Zn(2+) site is built by Cys158, Cys161, Cys171, and Cys174. The 'KMSKS' region signature appears at 348-352; it reads KMSKS. Lys351 lines the ATP pocket. The 107-residue stretch at 612–718 folds into the tRNA-binding domain; sequence DFAKIDLRIA…SGAKPGMRVK (107 aa).

This sequence belongs to the class-I aminoacyl-tRNA synthetase family. MetG type 1 subfamily. In terms of assembly, homodimer. Zn(2+) is required as a cofactor.

The protein localises to the cytoplasm. It catalyses the reaction tRNA(Met) + L-methionine + ATP = L-methionyl-tRNA(Met) + AMP + diphosphate. Functionally, is required not only for elongation of protein synthesis but also for the initiation of all mRNA translation through initiator tRNA(fMet) aminoacylation. The chain is Methionine--tRNA ligase from Burkholderia cenocepacia (strain ATCC BAA-245 / DSM 16553 / LMG 16656 / NCTC 13227 / J2315 / CF5610) (Burkholderia cepacia (strain J2315)).